A 354-amino-acid polypeptide reads, in one-letter code: S-adenosylmethionine:tRNA ribosyltransferase-isomerase (354 aa).

Belongs to the QueA family. Monomer.

The protein localises to the cytoplasm. It catalyses the reaction 7-aminomethyl-7-carbaguanosine(34) in tRNA + S-adenosyl-L-methionine = epoxyqueuosine(34) in tRNA + adenine + L-methionine + 2 H(+). It participates in tRNA modification; tRNA-queuosine biosynthesis. Functionally, transfers and isomerizes the ribose moiety from AdoMet to the 7-aminomethyl group of 7-deazaguanine (preQ1-tRNA) to give epoxyqueuosine (oQ-tRNA). The polypeptide is S-adenosylmethionine:tRNA ribosyltransferase-isomerase (Pseudomonas syringae pv. syringae (strain B728a)).